A 435-amino-acid polypeptide reads, in one-letter code: Eukaryotic peptide chain release factor subunit 1-3 (435 aa).

A2 is modified (N-acetylalanine).

This sequence belongs to the eukaryotic release factor 1 family. Heterodimer of two subunits, one of which binds GTP.

It is found in the cytoplasm. Its function is as follows. Directs the termination of nascent peptide synthesis (translation) in response to the termination codons UAA, UAG and UGA. Modulates plant growth and development. The protein is Eukaryotic peptide chain release factor subunit 1-3 (ERF1-3) of Arabidopsis thaliana (Mouse-ear cress).